A 1203-amino-acid polypeptide reads, in one-letter code: MIDVNNFEYMKIGLASPDKIRSWSYGEVKKPETINYRTLKPEKDGLFCERIFGPQKDWECHCGKYKRVRYKGVVCDRCGVEVTRAKVRRERMGHIELAAPVSHIWYFKGIPSRMGLVLDMSPRALEEVIYFASYVVTESGDTPLDKKQLLSEKEYRAYRDRYGSTFQAAMGAEAIKKLLQDIDLDKEVDFLKEELKTAQGQRRTRAIKRLEVLEAFRNSGNEPSWMILDVLPVIPPELRPMVQLDGGRFATSDLNDLYRRVINRNNRLKRLLDLGAPSIIVQNEKRMLQEAVDALIDNGRRGRPVTGPGNRPLKSLSHMLKGKQGRFRQNLLGKRVDYSGRSVIVVGPNLKMYQCGLPKEMALELFKPFVMKELVEKGLAHNIKSAKRKIERVQPEVWDVLESVIKEHPVLLNRAPTLHRLGIQAFEPTLVEGRAIRLHPLVCTAYNADFDGDQMAVHVPLSSEAQAEARLLMLAAQNILNPKDGKPVVTPSQDMVLGNYYLTLEREGAIGEGMVFKDANEALLAYQNGYVHLHTRVAVAASAVNNATFTEEQKNMLLLTTVGKLIFNEILPESFPYINEPTNSNLEKETPAKYFVEKGANIKEIIASREEVAPFSKKILGNIIAEVFKRFKITETSRMLDRMKNLGFKYSTKAGITVGVSDILVLGEKDEILHEAQAKVDNVIKQFRRGLITEEERYDRVISIWSNAKDVIQGKLMKSLNKRNPIFMMSDSGARGNASNFTQLAGMRGLMANPSGRIIELPIKSSFREGLTVLEYFISTHGARKGLADTALKTADSGYLTRRLVDVAQDVIVREDDCGTDRGLLIGAIKEGNEVIESLYDRLVGRFARKTVKHPETGEVLVAENQLITEDIAHIVENSGVETVNIRSAFTCNTRHGVCKKCYGRNLATGTDVEVGEAVGIIAAQSIGEPGTQLTMRTFHTGGVAGDDITQGLPRIQEIFEARNPKGQAVISEIDGVIAAINDVKDRQEVVVQGEVEARTYAIPYGARLKVIPGQKISHGKELTEGSIDPKELLKVTDITAVQEYLLREVQKVYRMQGVEIGDKHVEVMVRQMLRKVRVSDAGETDVLPGTLLDIHQFTDANAKVLLQGKQPATARPVLLGITKASLETDSFLSAASFQETTRVLTDAAIKGKRDELLGLKENVIIGKLVPAGTGMNRYRKVDLVKTTQDDMNVENDEVYVEQ.

Zn(2+) is bound by residues C60, C62, C75, and C78. Mg(2+) is bound by residues D449, D451, and D453. 4 residues coordinate Zn(2+): C818, C892, C899, and C902.

Belongs to the RNA polymerase beta' chain family. As to quaternary structure, the RNAP catalytic core consists of 2 alpha, 1 beta, 1 beta' and 1 omega subunit. When a sigma factor is associated with the core the holoenzyme is formed, which can initiate transcription. The cofactor is Mg(2+). It depends on Zn(2+) as a cofactor.

The catalysed reaction is RNA(n) + a ribonucleoside 5'-triphosphate = RNA(n+1) + diphosphate. DNA-dependent RNA polymerase catalyzes the transcription of DNA into RNA using the four ribonucleoside triphosphates as substrates. The polypeptide is DNA-directed RNA polymerase subunit beta' (Bacillus thuringiensis (strain Al Hakam)).